A 137-amino-acid polypeptide reads, in one-letter code: Protein MesC (137 aa).

In Leuconostoc mesenteroides, this protein is Protein MesC (mesC).